The sequence spans 294 residues: Negative regulator of the PHO system (294 aa).

The Protein kinase domain maps to 7–289 (FQQLEKLGEG…ARQSLEHPWF (283 aa)). ATP is bound by residues 13–21 (LGEGTYATV) and K36. Catalysis depends on D130, which acts as the Proton acceptor.

This sequence belongs to the protein kinase superfamily. CMGC Ser/Thr protein kinase family. CDC2/CDKX subfamily. In terms of assembly, interacts with a number of cyclins.

The enzyme catalyses L-seryl-[protein] + ATP = O-phospho-L-seryl-[protein] + ADP + H(+). It catalyses the reaction L-threonyl-[protein] + ATP = O-phospho-L-threonyl-[protein] + ADP + H(+). In terms of biological role, when phosphate concentrations are high it phosphorylates the PHO4 transcription factor thus establishing repression. The protein is Negative regulator of the PHO system (PHO85) of Yarrowia lipolytica (strain CLIB 122 / E 150) (Yeast).